A 104-amino-acid chain; its full sequence is Large ribosomal subunit protein uL24 (104 aa).

Belongs to the universal ribosomal protein uL24 family. In terms of assembly, part of the 50S ribosomal subunit.

Its function is as follows. One of two assembly initiator proteins, it binds directly to the 5'-end of the 23S rRNA, where it nucleates assembly of the 50S subunit. In terms of biological role, one of the proteins that surrounds the polypeptide exit tunnel on the outside of the subunit. This Pseudoalteromonas translucida (strain TAC 125) protein is Large ribosomal subunit protein uL24.